Here is a 154-residue protein sequence, read N- to C-terminus: Superoxide dismutase [Cu-Zn] (154 aa).

K19 participates in a covalent cross-link: Glycyl lysine isopeptide (Lys-Gly) (interchain with G-Cter in SUMO). 2 positions are modified to phosphoserine: S26 and S39. E43 lines the Zn(2+) pocket. Residues H47, H49, and H64 each contribute to the Cu cation site. The cysteines at positions 58 and 147 are disulfide-linked. H64 is a Zn(2+) binding site. K70 is covalently cross-linked (Glycyl lysine isopeptide (Lys-Gly) (interchain with G-Cter in SUMO)). H72, H81, and D84 together coordinate Zn(2+). S99 and S117 each carry phosphoserine. Residue H121 participates in Cu cation binding. Residues T132 and T138 each carry the phosphothreonine modification. R144 lines the substrate pocket.

It belongs to the Cu-Zn superoxide dismutase family. In terms of assembly, homodimer in holo form. In apo form, heterodimer with CCS1. Zinc-binding at 'His-16' of CCS1 and Glu-43 of apo-SOD1 is required for this heterodimerization. Cu cation is required as a cofactor. Zn(2+) serves as cofactor.

The protein resides in the cytoplasm. It localises to the mitochondrion intermembrane space. It carries out the reaction 2 superoxide + 2 H(+) = H2O2 + O2. Destroys radicals which are normally produced within the cells and which are toxic to biological systems. This chain is Superoxide dismutase [Cu-Zn], found in Saccharomyces cerevisiae (strain ATCC 204508 / S288c) (Baker's yeast).